Reading from the N-terminus, the 349-residue chain is Isopentenyl-diphosphate delta-isomerase (349 aa).

6–7 contributes to the substrate binding site; it reads RK. Residues 62–64, serine 93, and asparagine 122 contribute to the FMN site; that span reads AMT. Residue glutamine 152 coordinates substrate. A Mg(2+)-binding site is contributed by glutamate 153. Residues lysine 184, threonine 214, 258–259, and 280–281 contribute to the FMN site; these read GG and AG.

Belongs to the IPP isomerase type 2 family. In terms of assembly, homooctamer. Dimer of tetramers. Requires FMN as cofactor. NADPH serves as cofactor. The cofactor is Mg(2+).

Its subcellular location is the cytoplasm. The catalysed reaction is isopentenyl diphosphate = dimethylallyl diphosphate. Functionally, involved in the biosynthesis of isoprenoids. Catalyzes the 1,3-allylic rearrangement of the homoallylic substrate isopentenyl (IPP) to its allylic isomer, dimethylallyl diphosphate (DMAPP). The polypeptide is Isopentenyl-diphosphate delta-isomerase (Bacillus thuringiensis subsp. konkukian (strain 97-27)).